The following is a 383-amino-acid chain: tRNA pseudouridine synthase B (383 aa).

Asp-53 (nucleophile) is an active-site residue.

The protein belongs to the pseudouridine synthase TruB family. Type 1 subfamily.

It carries out the reaction uridine(55) in tRNA = pseudouridine(55) in tRNA. Its function is as follows. Responsible for synthesis of pseudouridine from uracil-55 in the psi GC loop of transfer RNAs. The protein is tRNA pseudouridine synthase B of Tropheryma whipplei (strain TW08/27) (Whipple's bacillus).